The primary structure comprises 445 residues: Phosphoglucosamine mutase (445 aa).

The Phosphoserine intermediate role is filled by S102. Mg(2+) is bound by residues S102, D241, D243, and D245. S102 carries the post-translational modification Phosphoserine.

This sequence belongs to the phosphohexose mutase family. It depends on Mg(2+) as a cofactor. Activated by phosphorylation.

The catalysed reaction is alpha-D-glucosamine 1-phosphate = D-glucosamine 6-phosphate. In terms of biological role, catalyzes the conversion of glucosamine-6-phosphate to glucosamine-1-phosphate. The protein is Phosphoglucosamine mutase of Aliivibrio fischeri (strain ATCC 700601 / ES114) (Vibrio fischeri).